Consider the following 177-residue polypeptide: MTESNILLTGKPGIGKTTVIKRTVELLSCSSTGFYTREIKRGDPRVGFEIISLQTGERLPLAHTDFTTAEDRVGKYGVKAENLLGFLKEINEAMTSNKPQCLVIDEIGKMEFFTPGFHETVDKAFQSSYPLLATIMKKSHKFCDYLKNRGDTDVIEVTENNRDDLPEKLAKRIEEQL.

Residues 10-17 and 101-108 contribute to the ATP site; these read GKPGIGKT and CLVIDEIG.

The protein belongs to the THEP1 NTPase family.

It catalyses the reaction a ribonucleoside 5'-triphosphate + H2O = a ribonucleoside 5'-diphosphate + phosphate + H(+). In terms of biological role, has nucleotide phosphatase activity towards ATP, GTP, CTP, TTP and UTP. May hydrolyze nucleoside diphosphates with lower efficiency. The polypeptide is Nucleoside-triphosphatase THEP1 (Natranaerobius thermophilus (strain ATCC BAA-1301 / DSM 18059 / JW/NM-WN-LF)).